The following is a 369-amino-acid chain: Putative protein FAM10A5 (369 aa).

Positions 38–98 (MGGKVPPATQ…IEPDTDAPQE (61 aa)) are disordered. Residues 49-73 (AKSEENTKEEKPDSKKVEEDLKADE) show a composition bias toward basic and acidic residues. Acidic residues predominate over residues 89–98 (IEPDTDAPQE). 3 TPR repeats span residues 114-147 (ANDK…NPRL), 149-181 (ILYA…NPDS), and 183-215 (QPYK…DYDE). Over residues 256–272 (KAQEEQERAQREEEARR) the composition is skewed to basic and acidic residues. The tract at residues 256-300 (KAQEEQERAQREEEARRQSGAHYGPFPGGFPGGMPGNFPGGMPGM) is disordered. Residues 281–300 (FPGGFPGGMPGNFPGGMPGM) show a composition bias toward gly residues. Residues 319–358 (DPEALAAMQDPEVMVAFQDVAQNPANMSKYQSNPKVMNLI) form the STI1 domain. Ser346 carries the phosphoserine modification. N6-acetyllysine is present on residues Lys353 and Lys360.

Belongs to the FAM10 family.

The protein localises to the cytoplasm. The chain is Putative protein FAM10A5 (ST13P5) from Homo sapiens (Human).